Consider the following 1037-residue polypeptide: Caspase recruitment domain-containing protein 6 (1037 aa).

N-acetylalanine is present on A2. A CARD domain is found at 3–94 (TESTPSEIIE…QSAAICGLRH (92 aa)). S154 is subject to Phosphoserine. Disordered regions lie at residues 235–270 (DPEHVGYDGEEDFENSETTEFSGEEPSYEGSETSLS), 669–704 (VSSGENMAGTAEGEGQQRHSQLKSSSKSQALMPIQE), and 887–1037 (RTSH…GGKH). A compositionally biased stretch (acidic residues) spans 242 to 261 (DGEEDFENSETTEFSGEEPS). The segment covering 690–699 (LKSSSKSQAL) has biased composition (low complexity). 3 stretches are compositionally biased toward polar residues: residues 911 to 928 (ASQQGVQMKTQGGASNPA), 938 to 954 (KSSQFKSDQSNPSTVKH), and 963 to 984 (VPSQPKSSQTKSCQSQPSQTKP). S985 carries the phosphoserine modification. Positions 994 to 1012 (PSQPWPPQSKPSQPRPPQP) are enriched in pro residues. Residues 1023–1037 (KAHHSKAGQKRGGKH) are compositionally biased toward basic residues.

Functionally, may be involved in apoptosis. This chain is Caspase recruitment domain-containing protein 6 (CARD6), found in Homo sapiens (Human).